We begin with the raw amino-acid sequence, 102 residues long: Large ribosomal subunit protein bL21 (102 aa).

This sequence belongs to the bacterial ribosomal protein bL21 family. In terms of assembly, part of the 50S ribosomal subunit. Contacts protein L20.

Its function is as follows. This protein binds to 23S rRNA in the presence of protein L20. This Geobacter sulfurreducens (strain ATCC 51573 / DSM 12127 / PCA) protein is Large ribosomal subunit protein bL21.